We begin with the raw amino-acid sequence, 389 residues long: Formate-dependent phosphoribosylglycinamide formyltransferase (389 aa).

N(1)-(5-phospho-beta-D-ribosyl)glycinamide-binding positions include 15–16 (EL) and glutamate 75. ATP contacts are provided by residues arginine 107, lysine 148, 153 to 158 (SSGKGQ), 188 to 191 (EEFL), and glutamate 196. In terms of domain architecture, ATP-grasp spans 112–302 (NLAAGELGLR…EFDLHLRAVL (191 aa)). Mg(2+)-binding residues include glutamate 261 and glutamate 273. N(1)-(5-phospho-beta-D-ribosyl)glycinamide contacts are provided by residues aspartate 280, lysine 350, and 357–358 (RR).

This sequence belongs to the PurK/PurT family. Homodimer.

It carries out the reaction N(1)-(5-phospho-beta-D-ribosyl)glycinamide + formate + ATP = N(2)-formyl-N(1)-(5-phospho-beta-D-ribosyl)glycinamide + ADP + phosphate + H(+). The protein operates within purine metabolism; IMP biosynthesis via de novo pathway; N(2)-formyl-N(1)-(5-phospho-D-ribosyl)glycinamide from N(1)-(5-phospho-D-ribosyl)glycinamide (formate route): step 1/1. Involved in the de novo purine biosynthesis. Catalyzes the transfer of formate to 5-phospho-ribosyl-glycinamide (GAR), producing 5-phospho-ribosyl-N-formylglycinamide (FGAR). Formate is provided by PurU via hydrolysis of 10-formyl-tetrahydrofolate. The sequence is that of Formate-dependent phosphoribosylglycinamide formyltransferase from Synechococcus sp. (strain CC9311).